We begin with the raw amino-acid sequence, 450 residues long: Flavin-containing monooxygenase FMO GS-OX-like 5 (450 aa).

17–22 (GAGPAG) provides a ligand contact to FAD. 215–220 (GNSSSA) contacts NADP(+).

It belongs to the FMO family. The cofactor is FAD.

In terms of biological role, catalyzes the conversion of methylthioalkyl glucosinolates of any chain length into methylsulfinylalkyl glucosinolates. The protein is Flavin-containing monooxygenase FMO GS-OX-like 5 of Arabidopsis thaliana (Mouse-ear cress).